The following is a 54-amino-acid chain: QSTNDLIKACGRELVRLWVEICGSVSWGRTALRMTLSEKCCQVGCIRKDIARLC.

Gln-1 is modified (pyrrolidone carboxylic acid). Cystine bridges form between Cys-10–Cys-41, Cys-22–Cys-54, and Cys-40–Cys-45.

This sequence belongs to the insulin family. In terms of assembly, heterodimer of a B chain and an A chain linked by two disulfide bonds.

It localises to the secreted. Its function is as follows. Relaxin is an ovarian hormone that acts with estrogen to produce dilatation of the birth canal in many mammals. This is Relaxin from Balaenoptera edeni (Pigmy Bryde's whale).